The following is a 209-amino-acid chain: Ribosomal RNA large subunit methyltransferase E (209 aa).

Positions 63, 65, 83, 99, and 124 each coordinate S-adenosyl-L-methionine. Lys164 serves as the catalytic Proton acceptor. The TRAM domain occupies 191–209 (EASRGRSREVYIVATGYKG).

The protein belongs to the class I-like SAM-binding methyltransferase superfamily. RNA methyltransferase RlmE family.

The protein resides in the cytoplasm. It catalyses the reaction uridine(2552) in 23S rRNA + S-adenosyl-L-methionine = 2'-O-methyluridine(2552) in 23S rRNA + S-adenosyl-L-homocysteine + H(+). Its function is as follows. Specifically methylates the uridine in position 2552 of 23S rRNA at the 2'-O position of the ribose in the fully assembled 50S ribosomal subunit. The chain is Ribosomal RNA large subunit methyltransferase E from Haemophilus influenzae (strain ATCC 51907 / DSM 11121 / KW20 / Rd).